The following is a 163-amino-acid chain: Nucleotide-binding protein EAT1b_2037 (163 aa).

Belongs to the YajQ family.

Functionally, nucleotide-binding protein. The chain is Nucleotide-binding protein EAT1b_2037 from Exiguobacterium sp. (strain ATCC BAA-1283 / AT1b).